The following is a 273-amino-acid chain: Putative pyruvate, phosphate dikinase regulatory protein (273 aa).

An ADP-binding site is contributed by 149–156 (GPSRTSKT).

Belongs to the pyruvate, phosphate/water dikinase regulatory protein family. PDRP subfamily.

The catalysed reaction is N(tele)-phospho-L-histidyl/L-threonyl-[pyruvate, phosphate dikinase] + ADP = N(tele)-phospho-L-histidyl/O-phospho-L-threonyl-[pyruvate, phosphate dikinase] + AMP + H(+). It catalyses the reaction N(tele)-phospho-L-histidyl/O-phospho-L-threonyl-[pyruvate, phosphate dikinase] + phosphate + H(+) = N(tele)-phospho-L-histidyl/L-threonyl-[pyruvate, phosphate dikinase] + diphosphate. In terms of biological role, bifunctional serine/threonine kinase and phosphorylase involved in the regulation of the pyruvate, phosphate dikinase (PPDK) by catalyzing its phosphorylation/dephosphorylation. This chain is Putative pyruvate, phosphate dikinase regulatory protein, found in Rickettsia conorii (strain ATCC VR-613 / Malish 7).